A 488-amino-acid chain; its full sequence is Retinoic acid receptor RXR-alpha (488 aa).

Residues 1–160 (MSSAAMDTKH…GAMASFTKHI (160 aa)) are modulating. Residue lysine 134 forms a Glycyl lysine isopeptide (Lys-Gly) (interchain with G-Cter in SUMO) linkage. The nuclear receptor DNA-binding region spans 158–233 (KHICAICGDR…MGMKREAVQE (76 aa)). Zn(2+)-binding residues include cysteine 161, cysteine 164, cysteine 178, and cysteine 181. The NR C4-type zinc finger occupies 161–181 (CAICGDRSSGKHYGVYSCEGC). The interval 186–191 (KRTVRK) is nuclear localization signal. Zn(2+) is bound by residues cysteine 197, cysteine 203, cysteine 213, and cysteine 216. The NR C4-type zinc finger occupies 197–216 (CRDSKDCMIDKRQRNRCQYC). A hinge region spans residues 227-250 (KREAVQEERQRGKERNENEVESSN). Over residues 232–244 (QEERQRGKERNEN) the composition is skewed to basic and acidic residues. Residues 232–256 (QEERQRGKERNENEVESSNSANEDM) are disordered. An NR LBD domain is found at 253 to 484 (NEDMPVEKIL…TFLMEMLEAP (232 aa)). Arginine 342 and alanine 353 together coordinate 9-cis-retinoate. Residues arginine 342 and alanine 353 each contribute to the all-trans-retinoate site. Positions 374–394 (RVLTELVSKMRDMQMDKTELG) are required for nuclear export. The interval 473-484 (IDTFLMEMLEAP) is AF-2.

This sequence belongs to the nuclear hormone receptor family. NR2 subfamily. Homodimer. Heterodimer; with a rar molecule. Binds DNA preferentially as a rar/rxr heterodimer. Interacts with coactivator ncoa3 and with senp6. Post-translationally, sumoylated on Lys-134; which negatively regulates transcriptional activity. Desumoylated specifically by SENP6.

It is found in the nucleus. Receptor for retinoic acid that acts as a transcription factor. Forms homo- or heterodimers with retinoic acid receptors (rars) and binds to target response elements in response to their ligands, all-trans or 9-cis retinoic acid, to regulate gene expression in various biological processes. The rar/rxr heterodimers bind to the retinoic acid response elements (RARE) composed of tandem 5'-AGGTCA-3' sites known as DR1-DR5 to regulate transcription. The high affinity ligand for rxrs is 9-cis retinoic acid. In the absence of ligand, the rar/rxr heterodimers associate with a multiprotein complex containing transcription corepressors that induce histone deacetylation, chromatin condensation and transcriptional suppression. On ligand binding, the corepressors dissociate from the receptors and coactivators are recruited leading to transcriptional activation. In Xenopus laevis (African clawed frog), this protein is Retinoic acid receptor RXR-alpha (rxra).